We begin with the raw amino-acid sequence, 736 residues long: Acyl-coenzyme A oxidase (736 aa).

It belongs to the acyl-CoA oxidase family. FAD serves as cofactor.

The protein localises to the peroxisome. It carries out the reaction a 2,3-saturated acyl-CoA + O2 = a (2E)-enoyl-CoA + H2O2. Its pathway is lipid metabolism; peroxisomal fatty acid beta-oxidation. The polypeptide is Acyl-coenzyme A oxidase (POX1) (Kluyveromyces lactis (strain ATCC 8585 / CBS 2359 / DSM 70799 / NBRC 1267 / NRRL Y-1140 / WM37) (Yeast)).